Consider the following 241-residue polypeptide: 2-C-methyl-D-erythritol 4-phosphate cytidylyltransferase (241 aa).

The protein belongs to the IspD/TarI cytidylyltransferase family. IspD subfamily. In terms of assembly, homodimer.

The enzyme catalyses 2-C-methyl-D-erythritol 4-phosphate + CTP + H(+) = 4-CDP-2-C-methyl-D-erythritol + diphosphate. The protein operates within isoprenoid biosynthesis; isopentenyl diphosphate biosynthesis via DXP pathway; isopentenyl diphosphate from 1-deoxy-D-xylulose 5-phosphate: step 2/6. Its function is as follows. Catalyzes the formation of 4-diphosphocytidyl-2-C-methyl-D-erythritol from CTP and 2-C-methyl-D-erythritol 4-phosphate (MEP). This Yersinia pestis protein is 2-C-methyl-D-erythritol 4-phosphate cytidylyltransferase.